Reading from the N-terminus, the 699-residue chain is Transcription factor MYC2 (699 aa).

Residues Pro-25–Ala-60 form a disordered region. The interval Ile-93 to Glu-158 is JAZ-interaction domain. The interval Asp-290–Arg-530 is disordered. A compositionally biased stretch (polar residues) spans His-306–Pro-321. Low complexity-rich tracts occupy residues Pro-335–Gln-349 and Ser-387–Leu-412. 2 stretches are compositionally biased toward polar residues: residues Phe-413–Pro-449 and Ser-459–Thr-472. The segment covering Ser-478–Ser-494 has biased composition (basic and acidic residues). The Nuclear localization signal signature appears at Lys-506–Lys-514. Over residues Arg-507–Ala-516 the composition is skewed to basic residues. Basic and acidic residues predominate over residues Asn-517–Arg-530. A basic motif; degenerate region spans residues Glu-520–Arg-533. The bHLH domain maps to Glu-520 to Leu-569. Residues Glu-534–Leu-569 are helix-loop-helix motif. The disordered stretch occupies residues Thr-582 to Arg-611.

It belongs to the bHLH protein family. In terms of assembly, interacts with TIFY3/JAZ1. In terms of tissue distribution, highly expressed in spikelets and floral organs.

It localises to the nucleus. Its function is as follows. Transcriptional activator involved in jasmonate (JA) signaling pathway during spikelet development. Binds to the G2 region G-box (5'-CACGTG-3') of the MADS1 promoter and thus directly regulates the expression of MADS1. Its function in MADS1 activation is abolished by TIFY3/JAZ1 which directly target MYC2 during spikelet development. This is Transcription factor MYC2 from Oryza sativa subsp. japonica (Rice).